A 659-amino-acid chain; its full sequence is 4-alpha-glucanotransferase (659 aa).

Glu-123 functions as the Nucleophile in the catalytic mechanism. The active-site Proton donor is the Asp-214.

Belongs to the glycosyl hydrolase 57 family. In terms of assembly, homodimer.

The catalysed reaction is Transfers a segment of a (1-&gt;4)-alpha-D-glucan to a new position in an acceptor, which may be glucose or a (1-&gt;4)-alpha-D-glucan.. Inhibited by p-chloromercuribenzoic acid, monoiodoacetic acid, mercury and nickel ions. Functionally, catalyzes the transglycosylation of maltooligosaccharides, yielding maltooligosaccharides of various lengths and glucose. Maltose and glucose can be used as acceptors in the transfer reaction. This is 4-alpha-glucanotransferase (jgt) from Thermococcus litoralis (strain ATCC 51850 / DSM 5473 / JCM 8560 / NS-C).